The following is a 220-amino-acid chain: Catechol O-methyltransferase (220 aa).

Residues V44, E66, 68-69, S74, E92, and A121 contribute to the S-adenosyl-L-methionine site; that span reads GT. D139 contributes to the a divalent metal cation binding site. An S-adenosyl-L-methionine-binding site is contributed by D141. A divalent metal cation contacts are provided by D165 and N166.

It belongs to the class I-like SAM-binding methyltransferase superfamily. Cation-dependent O-methyltransferase family. In terms of assembly, homodimer. Requires a divalent metal cation as cofactor.

The catalysed reaction is a catechol + S-adenosyl-L-methionine = a guaiacol + S-adenosyl-L-homocysteine + H(+). With respect to regulation, inhibited by EDTA. In terms of biological role, catechol O-methyltransferase that can use various catechol-like compounds such as gallic acid (GA), 3,4-dihydroxy-5-methoxy-benzoic acid (5OMeBA), protocatechuic acid (PCA), 3,4-dihydroxy-benzaldehyde (DHA), dopamine, caffeic acid (CA), luteolin, quercetin, and 5-hydroxyuridine. This chain is Catechol O-methyltransferase, found in Mycobacterium tuberculosis (strain ATCC 25618 / H37Rv).